The chain runs to 715 residues: Polyribonucleotide nucleotidyltransferase (715 aa).

The Mg(2+) site is built by D500 and D506. The KH domain occupies 567–634 (PKVKMIRINP…AYIESLVREA (68 aa)). Residues 637 to 712 (GELYEAKVTR…ERGRVDLSRK (76 aa)) form the S1 motif domain.

It belongs to the polyribonucleotide nucleotidyltransferase family. The cofactor is Mg(2+).

The protein resides in the cytoplasm. The enzyme catalyses RNA(n+1) + phosphate = RNA(n) + a ribonucleoside 5'-diphosphate. In terms of biological role, involved in mRNA degradation. Catalyzes the phosphorolysis of single-stranded polyribonucleotides processively in the 3'- to 5'-direction. The polypeptide is Polyribonucleotide nucleotidyltransferase (Acholeplasma laidlawii (strain PG-8A)).